Here is a 483-residue protein sequence, read N- to C-terminus: MGLVASCFGGLAAYAAESVACCCGSAACSLCCRSCPSCTNSTSTRITYAILFFLSSIAAWIMLDKDVSKGLMKVCCYHSTLFRLVLFTQPAIKTTTNVVPWGELGVMRIMFSVCLFHLFLSLCTIGVSSSKDPRSSLHNGMWFIKLILLVGAMVGSFFISNSFFIGASWSWIGLVGAVLFMIVQFILLVDFAYSWNDSWVGKLEEGSKCAGFGSYRLISATVMLMAFVITLTVLMFHFYTNGDCKLSNFFIGFNLALALLVTLTSMLPSVREALPSSGILQSSVVAAYATYLVWSAVSGVPSTCHPLIAVAPLFLSSRGFLPPLPYVALKPAECGGDAGTNTAAIVIGALLTFISVAYSSIRTSSKSQLGKLGLQQGSNENIYLMDDKAADFDEDDEDRRLQRVVDNEQDAVRYSWSFFHLTFAVAALYLMMVLTEWDSSDADVRIGKGWASVWVQVVSSWVIFLLYGWTMMAPVCLPDRDFS.

Helical transmembrane passes span 43-63 (STRI…WIML), 109-129 (IMFS…GVSS), 146-166 (LILL…FFIG), 169-189 (WSWI…ILLV), 218-238 (ISAT…MFHF), 249-269 (FFIG…MLPS), 274-294 (LPSS…YLVW), 295-315 (SAVS…PLFL), 338-358 (AGTN…SVAY), 414-434 (YSWS…MMVL), and 457-477 (VVSS…PVCL).

The protein belongs to the TDE1 family.

The protein localises to the endoplasmic reticulum membrane. In terms of biological role, enhances the incorporation of serine into phosphatidylserine and sphingolipids. The polypeptide is Probable serine incorporator (serinc) (Monosiga brevicollis (Choanoflagellate)).